The chain runs to 544 residues: Probable protein kinase UbiB (544 aa).

Residues aspartate 123–leucine 501 enclose the Protein kinase domain. ATP is bound by residues leucine 129–valine 137 and lysine 152. Aspartate 287 functions as the Proton acceptor in the catalytic mechanism. 2 helical membrane-spanning segments follow: residues glycine 496 to isoleucine 516 and glutamine 519 to tryptophan 539.

The protein belongs to the ABC1 family. UbiB subfamily.

Its subcellular location is the cell inner membrane. It participates in cofactor biosynthesis; ubiquinone biosynthesis [regulation]. Is probably a protein kinase regulator of UbiI activity which is involved in aerobic coenzyme Q (ubiquinone) biosynthesis. The sequence is that of Probable protein kinase UbiB from Vibrio cholerae serotype O1 (strain ATCC 39315 / El Tor Inaba N16961).